Reading from the N-terminus, the 271-residue chain is Shikimate dehydrogenase (NADP(+)) (271 aa).

Shikimate-binding positions include 14–16 (SLS) and Thr61. Catalysis depends on Lys65, which acts as the Proton acceptor. The shikimate site is built by Asn86 and Asp101. NADP(+)-binding positions include 125–129 (GAGGA) and Ile212. Tyr214 lines the shikimate pocket. Gly235 is a binding site for NADP(+).

The protein belongs to the shikimate dehydrogenase family. As to quaternary structure, homodimer.

It carries out the reaction shikimate + NADP(+) = 3-dehydroshikimate + NADPH + H(+). It functions in the pathway metabolic intermediate biosynthesis; chorismate biosynthesis; chorismate from D-erythrose 4-phosphate and phosphoenolpyruvate: step 4/7. In terms of biological role, involved in the biosynthesis of the chorismate, which leads to the biosynthesis of aromatic amino acids. Catalyzes the reversible NADPH linked reduction of 3-dehydroshikimate (DHSA) to yield shikimate (SA). This Clostridium perfringens (strain SM101 / Type A) protein is Shikimate dehydrogenase (NADP(+)).